A 150-amino-acid chain; its full sequence is Large ribosomal subunit protein bL9 (150 aa).

This sequence belongs to the bacterial ribosomal protein bL9 family.

Its function is as follows. Binds to the 23S rRNA. The sequence is that of Large ribosomal subunit protein bL9 from Corynebacterium glutamicum (strain R).